The primary structure comprises 671 residues: DNA ligase (671 aa).

NAD(+) contacts are provided by residues 32–36 (DAEYD), 81–82 (SL), and E113. Residue K115 is the N6-AMP-lysine intermediate of the active site. R136, E173, K290, and K314 together coordinate NAD(+). Residues C408, C411, C426, and C432 each contribute to the Zn(2+) site. Residues 593-671 (EIDSPFAGKT…EAEMIRLLGA (79 aa)) enclose the BRCT domain.

It belongs to the NAD-dependent DNA ligase family. LigA subfamily. The cofactor is Mg(2+). Mn(2+) serves as cofactor.

The catalysed reaction is NAD(+) + (deoxyribonucleotide)n-3'-hydroxyl + 5'-phospho-(deoxyribonucleotide)m = (deoxyribonucleotide)n+m + AMP + beta-nicotinamide D-nucleotide.. DNA ligase that catalyzes the formation of phosphodiester linkages between 5'-phosphoryl and 3'-hydroxyl groups in double-stranded DNA using NAD as a coenzyme and as the energy source for the reaction. It is essential for DNA replication and repair of damaged DNA. The polypeptide is DNA ligase (Salmonella choleraesuis (strain SC-B67)).